The sequence spans 361 residues: 45 kDa calcium-binding protein (361 aa).

Positions 1–35 are cleaved as a signal peptide; the sequence is MVWLVAMTPRQSSLCGLAAHGLWFLGLVLLMDATA. Asn39 carries an N-linked (GlcNAc...) asparagine glycan. EF-hand domains lie at 97-132 and 136-171; these read RSRR…KTAE and EAVK…SKGH. A Phosphoserine modification is found at Ser98. Ca(2+)-binding residues include Asp110, Asn112, Asp114, Arg116, Glu121, Asp149, Asp151, Asp153, His155, and Glu160. Thr192 carries the phosphothreonine modification. EF-hand domains follow at residues 196–231, 232–267, 277–312, and 313–348; these read LGNL…HSRG, MLKF…TVEN, WVKD…MNEY, and NALN…FTGS. Asp212 lines the Ca(2+) pocket. Thr216 is subject to Phosphothreonine. Positions 219, 245, 247, 249, 251, and 256 each coordinate Ca(2+). Thr264 carries the post-translational modification Phosphothreonine. Residues Asp290, Asn292, and Asp294 each coordinate Ca(2+). The residue at position 298 (Thr298) is a Phosphothreonine. Residues Glu301, Asp326, Asn328, Asn330, His332, and Glu337 each contribute to the Ca(2+) site. The segment at 308–361 is necessary for intracellular retention in Golgi apparatus lumen; sequence PMNEYNALNEAKQMIAIADENQNHHLEPEEILKYSEFFTGSKLMDYARNVHEEF.

It belongs to the CREC family. In terms of tissue distribution, ubiquitous.

It localises to the golgi apparatus lumen. Its function is as follows. May regulate calcium-dependent activities in the endoplasmic reticulum lumen or post-ER compartment. The sequence is that of 45 kDa calcium-binding protein (Sdf4) from Mus musculus (Mouse).